Consider the following 74-residue polypeptide: Fulgimotoxin (74 aa).

Gln-1 carries the pyrrolidone carboxylic acid modification. 5 cysteine pairs are disulfide-bonded: Cys-10/Cys-34, Cys-13/Cys-21, Cys-27/Cys-51, Cys-55/Cys-66, and Cys-67/Cys-72.

This sequence belongs to the three-finger toxin family. Ancestral subfamily. Boigatoxin sub-subfamily. Monomer. Post-translationally, the N-terminus is blocked. Contains 5 disulfide bonds. Expressed by the venom gland.

The protein resides in the secreted. Reptile-specific three-finger toxin that is lethal at low doses for lizards, but not for mice. Probably acts as a neurotoxin. The sequence is that of Fulgimotoxin from Oxybelis fulgidus (Green vine snake).